The following is a 249-amino-acid chain: Protein YIPF4 (249 aa).

A compositionally biased stretch (pro residues) spans Met1–Phe15. A disordered region spans residues Met1 to Pro40. Residues Met1–Asp116 are Cytoplasmic-facing. The span at Thr16–Ser26 shows a compositional bias: polar residues. A helical transmembrane segment spans residues Asn117 to Gly137. Gln138 is a topological domain (lumenal). The helical transmembrane segment at Phe139 to Leu159 threads the bilayer. The Cytoplasmic portion of the chain corresponds to Ala160–Gln171. A helical transmembrane segment spans residues Val172–Val192. The Lumenal segment spans residues Val193–Ser200. Residues Thr201 to Gly221 traverse the membrane as a helical segment. The Cytoplasmic segment spans residues Glu222–Lys228. A helical transmembrane segment spans residues Pro229 to Val249.

This sequence belongs to the YIP1 family.

It localises to the golgi apparatus. It is found in the cis-Golgi network membrane. In terms of biological role, involved in the maintenance of the Golgi structure. This is Protein YIPF4 (YIPF4) from Gallus gallus (Chicken).